A 389-amino-acid polypeptide reads, in one-letter code: Succinate--CoA ligase [ADP-forming] subunit beta (389 aa).

An ATP-grasp domain is found at 9 to 244 (KEIFRSMGVA…LDEEDPKEIE (236 aa)). Residues Lys-46, 53–55 (GRG), Glu-99, Cys-102, and Glu-107 contribute to the ATP site. The Mg(2+) site is built by Asn-199 and Asp-213. Substrate-binding positions include Asn-264 and 321–323 (GIM).

Belongs to the succinate/malate CoA ligase beta subunit family. In terms of assembly, heterotetramer of two alpha and two beta subunits. The cofactor is Mg(2+).

The enzyme catalyses succinate + ATP + CoA = succinyl-CoA + ADP + phosphate. It catalyses the reaction GTP + succinate + CoA = succinyl-CoA + GDP + phosphate. Its pathway is carbohydrate metabolism; tricarboxylic acid cycle; succinate from succinyl-CoA (ligase route): step 1/1. In terms of biological role, succinyl-CoA synthetase functions in the citric acid cycle (TCA), coupling the hydrolysis of succinyl-CoA to the synthesis of either ATP or GTP and thus represents the only step of substrate-level phosphorylation in the TCA. The beta subunit provides nucleotide specificity of the enzyme and binds the substrate succinate, while the binding sites for coenzyme A and phosphate are found in the alpha subunit. This chain is Succinate--CoA ligase [ADP-forming] subunit beta, found in Macrococcus caseolyticus (strain JCSC5402) (Macrococcoides caseolyticum).